Reading from the N-terminus, the 194-residue chain is Peptidyl-tRNA hydrolase (194 aa).

Y16 serves as a coordination point for tRNA. H21 functions as the Proton acceptor in the catalytic mechanism. TRNA contacts are provided by F67, N69, and N115.

Belongs to the PTH family. In terms of assembly, monomer.

The protein resides in the cytoplasm. The catalysed reaction is an N-acyl-L-alpha-aminoacyl-tRNA + H2O = an N-acyl-L-amino acid + a tRNA + H(+). In terms of biological role, hydrolyzes ribosome-free peptidyl-tRNAs (with 1 or more amino acids incorporated), which drop off the ribosome during protein synthesis, or as a result of ribosome stalling. Functionally, catalyzes the release of premature peptidyl moieties from peptidyl-tRNA molecules trapped in stalled 50S ribosomal subunits, and thus maintains levels of free tRNAs and 50S ribosomes. The sequence is that of Peptidyl-tRNA hydrolase from Escherichia coli O81 (strain ED1a).